Reading from the N-terminus, the 287-residue chain is Ribosomal RNA-processing protein 8 (287 aa).

The segment at 1–62 (MTTEENKTSR…SAPSKRPKPS (62 aa)) is disordered. A compositionally biased stretch (basic residues) spans 9–21 (SRNRKRKRQRNPK). A compositionally biased stretch (basic and acidic residues) spans 35 to 46 (QNEKKNQRDTKN). Residues histidine 107, glycine 142, aspartate 160, aspartate 172, methionine 173, and cysteine 189 each contribute to the S-adenosyl-L-methionine site.

It belongs to the methyltransferase superfamily. RRP8 family.

The protein localises to the nucleus. Its subcellular location is the nucleolus. Functionally, probable methyltransferase required to silence rDNA. This chain is Ribosomal RNA-processing protein 8, found in Arabidopsis thaliana (Mouse-ear cress).